A 244-amino-acid chain; its full sequence is uncharacterized protein (244 aa).

This is an uncharacterized protein from Saccharomyces cerevisiae (strain ATCC 204508 / S288c) (Baker's yeast).